A 418-amino-acid chain; its full sequence is Serine/threonine-protein kinase PCRK1 (418 aa).

The tract at residues glycine 36 to serine 63 is disordered. The Protein kinase domain maps to phenylalanine 84 to valine 369. Residues isoleucine 90 to valine 98 and lysine 118 contribute to the ATP site. Aspartate 218 serves as the catalytic Proton acceptor. Residues serine 373, serine 377, and serine 385 each carry the phosphoserine modification.

This sequence belongs to the protein kinase superfamily. Ser/Thr protein kinase family. As to quaternary structure, interacts with FLS2.

The protein resides in the cell membrane. It catalyses the reaction L-seryl-[protein] + ATP = O-phospho-L-seryl-[protein] + ADP + H(+). It carries out the reaction L-threonyl-[protein] + ATP = O-phospho-L-threonyl-[protein] + ADP + H(+). In terms of biological role, involved in the activation of early immune responses. Plays a role in pattern-triggered immunity (PTI) induced by pathogen-associated molecular patterns (PAMPs) and damage-associated molecular patterns (DAMPs). Contributes to PTI in response to the bacterial pathogen Pseudomonas syringae pv maculicola strain ES4326. Contributes to PTI in response to the bacterial pathogen Pseudomonas syringae pv tomato strain DC3000. Functions redundantly with PCRK2 in basal resistance against bacterial pathogens and in regulation of plant immunity. Functions together with PCRK2 downstream of the PAMP receptor FLS2. Contributes to the induction of SARD1 and CBP60G, which are transcriptional activator of ICS1, an enzyme involved in salicylate (SA) biosynthesis upon pathogen attack. In Arabidopsis thaliana (Mouse-ear cress), this protein is Serine/threonine-protein kinase PCRK1.